The chain runs to 518 residues: Flagellin (518 aa).

Belongs to the bacterial flagellin family.

It localises to the secreted. Its subcellular location is the bacterial flagellum. Its function is as follows. Flagellin is the subunit protein which polymerizes to form the filaments of bacterial flagella. This is Flagellin (flaA) from Aquifex aeolicus (strain VF5).